Reading from the N-terminus, the 103-residue chain is Large ribosomal subunit protein eL42 (103 aa).

The segment at 37 to 56 is disordered; that stretch reads GKRRYDRKQSGFGGQTKPVF.

This sequence belongs to the eukaryotic ribosomal protein eL42 family.

This chain is Large ribosomal subunit protein eL42 (rpl36a), found in Dictyostelium discoideum (Social amoeba).